The primary structure comprises 265 residues: Zwei Ig domain protein zig-1 (265 aa).

Residues 1 to 17 (MKNLLLITFFVVSTVTA) form the signal peptide. The Extracellular segment spans residues 18–232 (LGGRGSKSAL…KMVDVRSEFQ (215 aa)). 2 consecutive Ig-like C2-type domains span residues 41-108 (HATD…TPHG) and 120-220 (PVVH…MLLV). 2 N-linked (GlcNAc...) asparagine glycosylation sites follow: N83 and N193. Cysteines 155 and 202 form a disulfide. The chain crosses the membrane as a helical span at residues 233-253 (WVYPLAVILITIFLLVVIIVF). Residues 254-265 (CEWRNKKSTSKA) lie on the Cytoplasmic side of the membrane.

In terms of tissue distribution, expressed in neurons and body wall muscles.

It is found in the cell membrane. Functionally, probably not involved in maintaining the position of ASI and ASH head neuron cell bodies and ventral nerve cord axons of PVQ, PVP, RMEV, AVK and HSN neurons. The protein is Zwei Ig domain protein zig-1 of Caenorhabditis elegans.